The following is a 596-amino-acid chain: V-type ATP synthase alpha chain (596 aa).

An ATP-binding site is contributed by 233 to 240 (GPFGAGKT).

This sequence belongs to the ATPase alpha/beta chains family.

The enzyme catalyses ATP + H2O + 4 H(+)(in) = ADP + phosphate + 5 H(+)(out). Functionally, produces ATP from ADP in the presence of a proton gradient across the membrane. The V-type alpha chain is a catalytic subunit. The protein is V-type ATP synthase alpha chain of Streptococcus gordonii (strain Challis / ATCC 35105 / BCRC 15272 / CH1 / DL1 / V288).